A 357-amino-acid polypeptide reads, in one-letter code: MYRILVINPGSSSTKVAVFEDEKKIAEKNVSHSVEELKKFKRSMDQEPLRRKAVEDFIDEVGYRIEDFSAIAARGGVLEPVPGGTYVVNEYMVDYLINRSPVDHVSNLAAVIGYKLGKPHGIPCFVVDPVSVDEMCDEARFSGIPEIERKSYSHALNIKAVLRKVSREMGKTPEEVKIVVAHLGSGISVCACKNGKIIDVNNANDEGPFSIERTGELPVGDVVKTAYSSKHSAAELKEEFTRKGGLLAYLGTKNLKKALDSMETSRKAKLVVEAMAYQIAKEIGGMCAVLGEKPDAIVITGGMAHEIRFVRMITDYIEKFGKVEVIPGELEMEALALGVLRVLRGEEKAMDYRSVVE.

It belongs to the acetokinase family.

It is found in the cytoplasm. The catalysed reaction is butanoate + ATP = butanoyl phosphate + ADP. This is Probable butyrate kinase 1 from Thermotoga maritima (strain ATCC 43589 / DSM 3109 / JCM 10099 / NBRC 100826 / MSB8).